The sequence spans 273 residues: Putative phosphoenolpyruvate synthase regulatory protein (273 aa).

Residue G153–T160 participates in ADP binding.

This sequence belongs to the pyruvate, phosphate/water dikinase regulatory protein family. PSRP subfamily.

It catalyses the reaction [pyruvate, water dikinase] + ADP = [pyruvate, water dikinase]-phosphate + AMP + H(+). It carries out the reaction [pyruvate, water dikinase]-phosphate + phosphate + H(+) = [pyruvate, water dikinase] + diphosphate. In terms of biological role, bifunctional serine/threonine kinase and phosphorylase involved in the regulation of the phosphoenolpyruvate synthase (PEPS) by catalyzing its phosphorylation/dephosphorylation. This is Putative phosphoenolpyruvate synthase regulatory protein from Yersinia enterocolitica serotype O:8 / biotype 1B (strain NCTC 13174 / 8081).